The chain runs to 367 residues: Quinolinate synthase (367 aa).

Iminosuccinate is bound by residues H45 and S62. Residue C109 coordinates [4Fe-4S] cluster. Iminosuccinate contacts are provided by residues 140 to 142 (YVN) and S161. [4Fe-4S] cluster is bound at residue C229. Iminosuccinate is bound by residues 255–257 (HPE) and T272. C319 contributes to the [4Fe-4S] cluster binding site.

This sequence belongs to the quinolinate synthase family. Type 3 subfamily. It depends on [4Fe-4S] cluster as a cofactor.

The protein localises to the cytoplasm. It carries out the reaction iminosuccinate + dihydroxyacetone phosphate = quinolinate + phosphate + 2 H2O + H(+). The protein operates within cofactor biosynthesis; NAD(+) biosynthesis; quinolinate from iminoaspartate: step 1/1. Functionally, catalyzes the condensation of iminoaspartate with dihydroxyacetone phosphate to form quinolinate. This chain is Quinolinate synthase, found in Geobacillus sp. (strain WCH70).